A 425-amino-acid polypeptide reads, in one-letter code: Glutamate-1-semialdehyde 2,1-aminomutase (425 aa).

Lys-265 bears the N6-(pyridoxal phosphate)lysine mark.

It belongs to the class-III pyridoxal-phosphate-dependent aminotransferase family. HemL subfamily. Homodimer. It depends on pyridoxal 5'-phosphate as a cofactor.

It localises to the cytoplasm. The catalysed reaction is (S)-4-amino-5-oxopentanoate = 5-aminolevulinate. Its pathway is porphyrin-containing compound metabolism; protoporphyrin-IX biosynthesis; 5-aminolevulinate from L-glutamyl-tRNA(Glu): step 2/2. This chain is Glutamate-1-semialdehyde 2,1-aminomutase, found in Nitrosospira multiformis (strain ATCC 25196 / NCIMB 11849 / C 71).